We begin with the raw amino-acid sequence, 181 residues long: Mytilin-1 (181 aa).

The N-terminal stretch at 1-22 is a signal peptide; the sequence is MISKYCLFVIVLGTTGTALVLT.

In terms of tissue distribution, component of the organic matrix of calcified shell layers like nacre and prisms.

It localises to the secreted. The sequence is that of Mytilin-1 from Mytilus galloprovincialis (Mediterranean mussel).